Here is a 302-residue protein sequence, read N- to C-terminus: Oxygen-dependent coproporphyrinogen-III oxidase (302 aa).

Ser-94 is a binding site for substrate. A divalent metal cation-binding residues include His-98 and His-108. The Proton donor role is filled by His-108. 110 to 112 (NVR) lines the substrate pocket. 2 residues coordinate a divalent metal cation: His-147 and His-177. An important for dimerization region spans residues 242-277 (YVEFNLVYDRGTIFGLQSGGRTESILMSLPPLVRWD). 260-262 (GGR) contacts substrate.

The protein belongs to the aerobic coproporphyrinogen-III oxidase family. In terms of assembly, homodimer. Requires a divalent metal cation as cofactor.

The protein resides in the cytoplasm. It carries out the reaction coproporphyrinogen III + O2 + 2 H(+) = protoporphyrinogen IX + 2 CO2 + 2 H2O. The protein operates within porphyrin-containing compound metabolism; protoporphyrin-IX biosynthesis; protoporphyrinogen-IX from coproporphyrinogen-III (O2 route): step 1/1. Involved in the heme biosynthesis. Catalyzes the aerobic oxidative decarboxylation of propionate groups of rings A and B of coproporphyrinogen-III to yield the vinyl groups in protoporphyrinogen-IX. This chain is Oxygen-dependent coproporphyrinogen-III oxidase, found in Alcanivorax borkumensis (strain ATCC 700651 / DSM 11573 / NCIMB 13689 / SK2).